The following is a 115-amino-acid chain: Nucleoid-associated protein Pro_0020 (115 aa).

Belongs to the YbaB/EbfC family. Homodimer.

The protein localises to the cytoplasm. The protein resides in the nucleoid. In terms of biological role, binds to DNA and alters its conformation. May be involved in regulation of gene expression, nucleoid organization and DNA protection. The polypeptide is Nucleoid-associated protein Pro_0020 (Prochlorococcus marinus (strain SARG / CCMP1375 / SS120)).